A 255-amino-acid polypeptide reads, in one-letter code: Protein NEN4 (255 aa).

The Exonuclease domain occupies 11–174 (VFFDLETNVP…DDVRMNLEVL (164 aa)). Mg(2+) is bound by residues Asp14 and Glu16. His161 serves as the catalytic Proton donor/acceptor. Mg(2+) is bound at residue Asp166.

Mg(2+) is required as a cofactor. In terms of tissue distribution, expressed in the sieve elements and phloem pole pericycle cells.

Its subcellular location is the nucleus. Functionally, probable exonuclease required for enuclation of sieve elements. In Arabidopsis thaliana (Mouse-ear cress), this protein is Protein NEN4.